The primary structure comprises 462 residues: UDP-N-acetylmuramoylalanine--D-glutamate ligase (462 aa).

Position 109–115 (109–115 (GTDGKST)) interacts with ATP.

It belongs to the MurCDEF family.

The protein localises to the cytoplasm. The enzyme catalyses UDP-N-acetyl-alpha-D-muramoyl-L-alanine + D-glutamate + ATP = UDP-N-acetyl-alpha-D-muramoyl-L-alanyl-D-glutamate + ADP + phosphate + H(+). It participates in cell wall biogenesis; peptidoglycan biosynthesis. Cell wall formation. Catalyzes the addition of glutamate to the nucleotide precursor UDP-N-acetylmuramoyl-L-alanine (UMA). The chain is UDP-N-acetylmuramoylalanine--D-glutamate ligase from Leptospira borgpetersenii serovar Hardjo-bovis (strain JB197).